The primary structure comprises 448 residues: Methionine aminopeptidase 2 (448 aa).

Residues 1-17 (MPATAEAADAATQATDA) show a composition bias toward low complexity. The segment at 1–87 (MPATAEAADA…QTEPPSIGLT (87 aa)) is disordered. Residues 21–34 (KLEENKLPEGQERG) are compositionally biased toward basic and acidic residues. Residues 35-46 (PEEEEDDDDDET) show a composition bias toward acidic residues. Basic residues predominate over residues 55–71 (KKKKKKKSGAKKKKSKT). His200 lines the substrate pocket. Asp220, Asp231, and His300 together coordinate a divalent metal cation. His308 contributes to the substrate binding site. A divalent metal cation-binding residues include Glu334 and Glu429.

Belongs to the peptidase M24A family. Methionine aminopeptidase eukaryotic type 2 subfamily. Co(2+) is required as a cofactor. Requires Zn(2+) as cofactor. It depends on Mn(2+) as a cofactor. The cofactor is Fe(2+).

The protein localises to the cytoplasm. It carries out the reaction Release of N-terminal amino acids, preferentially methionine, from peptides and arylamides.. Its function is as follows. Cotranslationally removes the N-terminal methionine from nascent proteins. The N-terminal methionine is often cleaved when the second residue in the primary sequence is small and uncharged (Met-Ala-, Cys, Gly, Pro, Ser, Thr, or Val). This Malassezia globosa (strain ATCC MYA-4612 / CBS 7966) (Dandruff-associated fungus) protein is Methionine aminopeptidase 2.